We begin with the raw amino-acid sequence, 421 residues long: GTPase Obg (421 aa).

The Obg domain maps to 1 to 158 (MYFIDEAINE…FKIKTELKIL (158 aa)). The region spanning 159–324 (ADVGLIGYPS…LKYKMLEMIK (166 aa)) is the OBG-type G domain. Residues 165 to 172 (GYPSVGKS), 190 to 194 (FTTLK), 211 to 214 (DLPG), 278 to 281 (NKMD), and 305 to 307 (SLL) contribute to the GTP site. The Mg(2+) site is built by Ser172 and Thr192. One can recognise an OCT domain in the interval 342-421 (TLEEEKPDFV…ICDRVFEFIT (80 aa)).

This sequence belongs to the TRAFAC class OBG-HflX-like GTPase superfamily. OBG GTPase family. Monomer. Mg(2+) is required as a cofactor.

The protein localises to the cytoplasm. Its function is as follows. An essential GTPase which binds GTP, GDP and possibly (p)ppGpp with moderate affinity, with high nucleotide exchange rates and a fairly low GTP hydrolysis rate. Plays a role in control of the cell cycle, stress response, ribosome biogenesis and in those bacteria that undergo differentiation, in morphogenesis control. This Phytoplasma mali (strain AT) protein is GTPase Obg.